Reading from the N-terminus, the 414-residue chain is Transforming growth factor beta-2 proprotein (414 aa).

The N-terminal stretch at 1 to 20 (MHYCVLSAFLLLHLVTVALS) is a signal peptide. 3 N-linked (GlcNAc...) asparagine glycosylation sites follow: Asn72, Asn140, and Asn241. Disulfide bonds link Cys309–Cys318, Cys317–Cys380, Cys346–Cys411, and Cys350–Cys413.

The protein belongs to the TGF-beta family. In terms of assembly, interacts with the serine proteases, HTRA1 and HTRA3. Interacts with ASPN. Interacts with MFAP5. As to quaternary structure, interacts with Transforming growth factor beta-2 (TGF-beta-2) chain; interaction is non-covalent and maintains (TGF-beta-2) in a latent state. Interacts with LRRC32/GARP; leading to regulate activation of TGF-beta-2. Interacts with NREP; the interaction results in a decrease in TGFB2 autoinduction. Transforming growth factor beta-2: Homodimer; disulfide-linked. Transforming growth factor beta-2: Interacts with TGF-beta receptors (TGFBR1 and TGFBR2), leading to signal transduction. Post-translationally, the precursor proprotein is cleaved in the Golgi apparatus to form Transforming growth factor beta-2 (TGF-beta-2) and Latency-associated peptide (LAP) chains, which remain non-covalently linked, rendering TGF-beta-2 inactive.

The protein resides in the secreted. It localises to the extracellular space. It is found in the extracellular matrix. Precursor of the Latency-associated peptide (LAP) and Transforming growth factor beta-2 (TGF-beta-2) chains, which constitute the regulatory and active subunit of TGF-beta-2, respectively. Its function is as follows. Required to maintain the Transforming growth factor beta-2 (TGF-beta-2) chain in a latent state during storage in extracellular matrix. Associates non-covalently with TGF-beta-2 and regulates its activation via interaction with 'milieu molecules', such as LTBP1 and LRRC32/GARP, that control activation of TGF-beta-2. In terms of biological role, multifunctional protein that regulates various processes such as angiogenesis and heart development. Activation into mature form follows different steps: following cleavage of the proprotein in the Golgi apparatus, Latency-associated peptide (LAP) and Transforming growth factor beta-2 (TGF-beta-2) chains remain non-covalently linked rendering TGF-beta-2 inactive during storage in extracellular matrix. At the same time, LAP chain interacts with 'milieu molecules', such as LTBP1 and LRRC32/GARP, that control activation of TGF-beta-2 and maintain it in a latent state during storage in extracellular milieus. Once activated following release of LAP, TGF-beta-2 acts by binding to TGF-beta receptors (TGFBR1 and TGFBR2), which transduce signal. This is Transforming growth factor beta-2 proprotein (TGFB2) from Bos taurus (Bovine).